Reading from the N-terminus, the 1244-residue chain is ATP-dependent helicase/nuclease subunit A (1244 aa).

The 472-residue stretch at 4–475 (KKWTAEQLAA…IGLSKNFRSR (472 aa)) folds into the UvrD-like helicase ATP-binding domain. An ATP-binding site is contributed by 25–32 (AAAGAGKT). Residues 515 to 816 (EDVKTATGPV…RIMSIHKSKG (302 aa)) enclose the UvrD-like helicase C-terminal domain. Positions 538–559 (EQNTDSAEEKLTDGEEQEDLDS) are disordered.

It belongs to the helicase family. AddA subfamily. In terms of assembly, heterodimer of AddA and AddB/RexB. Mg(2+) serves as cofactor.

It carries out the reaction Couples ATP hydrolysis with the unwinding of duplex DNA by translocating in the 3'-5' direction.. The catalysed reaction is ATP + H2O = ADP + phosphate + H(+). Its function is as follows. The heterodimer acts as both an ATP-dependent DNA helicase and an ATP-dependent, dual-direction single-stranded exonuclease. Recognizes the chi site generating a DNA molecule suitable for the initiation of homologous recombination. The AddA nuclease domain is required for chi fragment generation; this subunit has the helicase and 3' -&gt; 5' nuclease activities. This Desulforamulus reducens (strain ATCC BAA-1160 / DSM 100696 / MI-1) (Desulfotomaculum reducens) protein is ATP-dependent helicase/nuclease subunit A.